A 467-amino-acid chain; its full sequence is Methionine aminopeptidase 2-1 (467 aa).

Over residues 1–10 the composition is skewed to basic and acidic residues; it reads MGSKSPDGHR. The tract at residues 1–105 is disordered; that stretch reads MGSKSPDGHR…TPPRVSLPSI (105 aa). Residues 43–55 show a composition bias toward acidic residues; sequence DGDDEDEDGDDDG. Residues 75–90 show a composition bias toward basic residues; it reads KKRKRKSNKKKKKKTS. Residue His-219 coordinates substrate. Residues Asp-240, Asp-251, and His-320 each coordinate a divalent metal cation. Residue His-328 coordinates substrate. A divalent metal cation is bound by residues Glu-353 and Glu-448.

It belongs to the peptidase M24A family. Methionine aminopeptidase eukaryotic type 2 subfamily. Co(2+) is required as a cofactor. It depends on Zn(2+) as a cofactor. The cofactor is Mn(2+). Fe(2+) serves as cofactor.

It is found in the cytoplasm. The catalysed reaction is Release of N-terminal amino acids, preferentially methionine, from peptides and arylamides.. Cotranslationally removes the N-terminal methionine from nascent proteins. The N-terminal methionine is often cleaved when the second residue in the primary sequence is small and uncharged (Met-Ala-, Cys, Gly, Pro, Ser, Thr, or Val). This is Methionine aminopeptidase 2-1 from Arthroderma gypseum (strain ATCC MYA-4604 / CBS 118893) (Microsporum gypseum).